The sequence spans 634 residues: NRPS-independent siderophore synthetase rfs (634 aa).

NRPS-independent siderophore synthetase that catalyzes the rhizoferrin biosynthesis from citrate and diaminobutane via an ATP-dependent condensation of citrate with diaminobutane followed by the addition of a second citrate to the monocitryl-diaminobutane intermediate. Can also use as substrates the citrate and diaminobutane homologs oxaloacetic acid, diaminopropane, diaminobutane, diaminopentane, tricarballylic acid, hydroxylamine and ornithine. Forms only a mono-substituted intermediate with oxaloacetic acid and diaminopentane whereas both mono-citryl intermediates and full rhizoferrin derivatives were detected when diaminopropane, and ornithine were used as substrates. Tricarballylic acid only forms a rhizoferrin derivative, but no mono-substituted intermediate. The protein is NRPS-independent siderophore synthetase rfs of Rhizopus delemar (strain RA 99-880 / ATCC MYA-4621 / FGSC 9543 / NRRL 43880) (Mucormycosis agent).